The following is a 548-amino-acid chain: Probable malate:quinone oxidoreductase (548 aa).

The protein belongs to the MQO family. It depends on FAD as a cofactor.

It catalyses the reaction (S)-malate + a quinone = a quinol + oxaloacetate. It participates in carbohydrate metabolism; tricarboxylic acid cycle; oxaloacetate from (S)-malate (quinone route): step 1/1. This chain is Probable malate:quinone oxidoreductase, found in Escherichia coli O127:H6 (strain E2348/69 / EPEC).